The following is a 138-amino-acid chain: Extracellular glycoprotein lacritin (138 aa).

A signal peptide spans 1–19; the sequence is MKFTTLLFLAAVAGALVYA. Positions 20–79 are disordered; it reads EDASSDSTGADPAQEAGTSKPNEEISGPAEPASPPETTTTAQETSAAAVQGTAKVTSSRQ. Low complexity predominate over residues 43–67; it reads EISGPAEPASPPETTTTAQETSAAA. N-linked (GlcNAc...) asparagine glycosylation is present at N119.

Expressed in secretory granules of many acinar cells in lacrimal gland and in scattered acinar cells of salivary glands.

The protein localises to the secreted. Functionally, modulates secretion by lacrimal acinar cells. This chain is Extracellular glycoprotein lacritin (LACRT), found in Homo sapiens (Human).